We begin with the raw amino-acid sequence, 227 residues long: Endo-1,4-beta-xylanase 11A (227 aa).

The N-terminal stretch at methionine 1–arginine 36 is a signal peptide. The 191-residue stretch at alanine 37–serine 227 folds into the GH11 domain. The tract at residues valine 112–serine 136 is necrosis inducing domain. The active-site Nucleophile is the glutamate 122. The Proton donor role is filled by glutamate 214.

This sequence belongs to the glycosyl hydrolase 11 (cellulase G) family.

It localises to the secreted. It catalyses the reaction Endohydrolysis of (1-&gt;4)-beta-D-xylosidic linkages in xylans.. The protein operates within glycan degradation; xylan degradation. Its activity is regulated as follows. Significantly inhibited by the wheat xylanase inhibiting protein I (XIP-I) and the proteinaceous endoxylanase Triticum aestivum xylanase inhibitors I (TAXI-I), whereas no inhibition is detected with TAXI-II. In terms of biological role, endo-1,4-beta-xylanase involved in the hydrolysis of xylan, a major structural heterogeneous polysaccharide found in plant biomass representing the second most abundant polysaccharide in the biosphere, after cellulose. Required for plant infection and the appearance of secondary lesions. Is able to induce necrosis on leaves, seedling growth inhibition, induction of a ROS burst, electrolyte leakage, cytoplasm shrinkage, autofluorescence, cell death, and induction of defense genes, and this abilities are independent of the catalytic activity. Only exhibits elicitor activity in certain plants such as tomato, but not in N.benthamiana. The polypeptide is Endo-1,4-beta-xylanase 11A (Botryotinia fuckeliana (strain B05.10) (Noble rot fungus)).